The primary structure comprises 355 residues: Probable butyrate kinase (355 aa).

This sequence belongs to the acetokinase family.

It is found in the cytoplasm. The catalysed reaction is butanoate + ATP = butanoyl phosphate + ADP. This is Probable butyrate kinase from Listeria monocytogenes serotype 4a (strain HCC23).